The sequence spans 192 residues: Glycerol-3-phosphate acyltransferase (192 aa).

The next 5 membrane-spanning stretches (helical) occupy residues Met1–Leu21, Leu51–Val71, Pro78–Leu98, Val112–Phe132, and Leu155–Trp175.

This sequence belongs to the PlsY family. In terms of assembly, probably interacts with PlsX.

It localises to the cell inner membrane. The enzyme catalyses an acyl phosphate + sn-glycerol 3-phosphate = a 1-acyl-sn-glycero-3-phosphate + phosphate. It participates in lipid metabolism; phospholipid metabolism. Functionally, catalyzes the transfer of an acyl group from acyl-phosphate (acyl-PO(4)) to glycerol-3-phosphate (G3P) to form lysophosphatidic acid (LPA). This enzyme utilizes acyl-phosphate as fatty acyl donor, but not acyl-CoA or acyl-ACP. The protein is Glycerol-3-phosphate acyltransferase of Myxococcus xanthus (strain DK1622).